A 1820-amino-acid chain; its full sequence is Histone-lysine N-methyltransferase, H3 lysine-9 specific (1820 aa).

Disordered regions lie at residues 1–54 (MPGA…TSMR), 74–251 (NLLP…TPVT), 284–618 (SLSD…APTK), 634–681 (SSER…KKAV), 804–836 (NVDDQDSAQPQNQTPLPSAISVSSKKNHGSLSK), 850–893 (SSTL…VNSW), 911–944 (HAKKKWKERERGKEREKEKVREKEKAEEENEQLR), 966–996 (DVESRTRSIPRADGETRKRPPSPGISVSTDA), 1063–1126 (PLSV…NGAV), 1183–1270 (RYAV…DRTA), 1296–1335 (KASAVSPVPSANRPSPAPSAKADLLPQKRKRRLKKITSQQ), and 1385–1407 (RSEPRTKREPIEEDNNEYFTDSD). The span at 11 to 31 (VDNPLVLDSSDSDDNLSGLPL) shows a compositional bias: low complexity. Positions 109–129 (ADSSSPPENQNVISFLGNHSQ) are enriched in polar residues. A compositionally biased stretch (low complexity) spans 152 to 169 (GGENIAGQNNEANAAQAA). 2 stretches are compositionally biased toward polar residues: residues 174–204 (GTPSLTLSSNRPQSVSGAQLVVASSSRSAIN) and 212–222 (SIPQQSPSSRA). Low complexity-rich tracts occupy residues 226-236 (RSASIASSRSR), 284-311 (SLSDPTILSPPSATSAPPNSPIPSTSTT), and 339-352 (TPATTSPAGPGPSA). Basic and acidic residues predominate over residues 361 to 370 (KSSDQKESPR). The segment covering 374–385 (SKQPSSPSSTHG) has biased composition (polar residues). Positions 400–424 (SATSGKSSAASSRSKSRAPLSSRAA) are enriched in low complexity. Residues 433-442 (SKTTSVSSTH) are compositionally biased toward polar residues. Residues 443–459 (PPSRASPSSLPSQSQRQ) show a composition bias toward low complexity. Over residues 479–510 (TLSSGTGQSTPSKFSLPTSDVASNQKNKSTGL) the composition is skewed to polar residues. Composition is skewed to low complexity over residues 514–531 (PKKPSSTPTSSIPQRTST), 551–563 (QSSSEASRSIQTS), and 594–618 (TKATTLFHTTSSPPSPSQSTSAPTK). Composition is skewed to polar residues over residues 643–662 (GKSQTSDSVVAPAASQTAAS) and 810–827 (SAQPQNQTPLPSAISVSS). The segment covering 850-861 (SSTLGDSVSGLG) has biased composition (low complexity). Positions 869–893 (TQSMPQSPLPTTNTNNSSGIEVNSW) are enriched in polar residues. Composition is skewed to basic and acidic residues over residues 917-944 (KERERGKEREKEKVREKEKAEEENEQLR) and 966-983 (DVESRTRSIPRADGETRK). Residues 1076–1089 (SSSSTSTPSLLSRS) show a composition bias toward low complexity. Residues 1296-1320 (KASAVSPVPSANRPSPAPSAKADLL) are compositionally biased toward low complexity. A Pre-SET domain is found at 1516-1585 (LGCDCDGPCD…ECMNRVIQRG (70 aa)). Residues cysteine 1518, cysteine 1520, cysteine 1524, cysteine 1531, cysteine 1533, cysteine 1567, cysteine 1571, cysteine 1573, and cysteine 1577 each coordinate Zn(2+). Positions 1590–1750 (TGIEIFKTKE…KHEELCISYK (161 aa)) constitute an SET domain. Residues 1600–1602 (KGW), tyrosine 1643, arginine 1704, and 1707–1708 (NH) contribute to the S-adenosyl-L-methionine site. Zn(2+) is bound at residue cysteine 1710. The interval 1756-1794 (DDIPSPEPVKKKKGGKGKKQMSKTSASAHPPEMTALNSD) is disordered. The span at 1765-1776 (KKKKGGKGKKQM) shows a compositional bias: basic residues. The region spanning 1800–1816 (VKDICRCGAKNCDGRMF) is the Post-SET domain. Zn(2+) contacts are provided by cysteine 1804, cysteine 1806, and cysteine 1811.

This sequence belongs to the class V-like SAM-binding methyltransferase superfamily. Histone-lysine methyltransferase family. Suvar3-9 subfamily.

It localises to the nucleus. The protein resides in the chromosome. The catalysed reaction is N(6)-methyl-L-lysyl(9)-[histone H3] + S-adenosyl-L-methionine = N(6),N(6)-dimethyl-L-lysyl(9)-[histone H3] + S-adenosyl-L-homocysteine + H(+). The enzyme catalyses L-lysyl(9)-[histone H3] + S-adenosyl-L-methionine = N(6)-methyl-L-lysyl(9)-[histone H3] + S-adenosyl-L-homocysteine + H(+). In terms of biological role, histone methyltransferase that specifically dimethylates histone H3 to form H3K9me2. H3K9me2 represents a specific tag for epigenetic transcriptional repression by recruiting HP1 proteins to methylated histones. Mainly functions in heterochromatin regions, thereby playing a central role in the establishment of constitutive heterochromatin at centromeric regions. The chain is Histone-lysine N-methyltransferase, H3 lysine-9 specific from Cryptococcus neoformans var. grubii serotype A (strain H99 / ATCC 208821 / CBS 10515 / FGSC 9487) (Filobasidiella neoformans var. grubii).